A 739-amino-acid chain; its full sequence is Phosphoribosylformylglycinamidine synthase subunit PurL (739 aa).

Residue His-54 is part of the active site. Positions 57 and 96 each coordinate ATP. Glu-98 contacts Mg(2+). Residues 99 to 102 (SHNH) and Arg-121 each bind substrate. The Proton acceptor role is filled by His-100. Position 122 (Asp-122) interacts with Mg(2+). Substrate is bound at residue Gln-245. Residue Asp-273 coordinates Mg(2+). 317-319 (ESQ) contacts substrate. ATP-binding residues include Asp-500 and Gly-537. Asn-538 is a Mg(2+) binding site. Ser-540 is a substrate binding site.

This sequence belongs to the FGAMS family. As to quaternary structure, monomer. Part of the FGAM synthase complex composed of 1 PurL, 1 PurQ and 2 PurS subunits.

It is found in the cytoplasm. The enzyme catalyses N(2)-formyl-N(1)-(5-phospho-beta-D-ribosyl)glycinamide + L-glutamine + ATP + H2O = 2-formamido-N(1)-(5-O-phospho-beta-D-ribosyl)acetamidine + L-glutamate + ADP + phosphate + H(+). The protein operates within purine metabolism; IMP biosynthesis via de novo pathway; 5-amino-1-(5-phospho-D-ribosyl)imidazole from N(2)-formyl-N(1)-(5-phospho-D-ribosyl)glycinamide: step 1/2. In terms of biological role, part of the phosphoribosylformylglycinamidine synthase complex involved in the purines biosynthetic pathway. Catalyzes the ATP-dependent conversion of formylglycinamide ribonucleotide (FGAR) and glutamine to yield formylglycinamidine ribonucleotide (FGAM) and glutamate. The FGAM synthase complex is composed of three subunits. PurQ produces an ammonia molecule by converting glutamine to glutamate. PurL transfers the ammonia molecule to FGAR to form FGAM in an ATP-dependent manner. PurS interacts with PurQ and PurL and is thought to assist in the transfer of the ammonia molecule from PurQ to PurL. In Bacillus cereus (strain ATCC 14579 / DSM 31 / CCUG 7414 / JCM 2152 / NBRC 15305 / NCIMB 9373 / NCTC 2599 / NRRL B-3711), this protein is Phosphoribosylformylglycinamidine synthase subunit PurL.